We begin with the raw amino-acid sequence, 413 residues long: Alpha-1-antitrypsin-like protein CM55-MS (413 aa).

Positions methionine 1–alanine 24 are cleaved as a signal peptide. Glutamine 25 is modified (pyrrolidone carboxylic acid). N-linked (GlcNAc...) asparagine glycosylation is found at asparagine 65, asparagine 102, asparagine 165, and asparagine 266. Residues glycine 368 to arginine 387 form an RCL region.

The protein belongs to the serpin family. Expressed in liver.

The protein resides in the secreted. In terms of biological role, serine protease inhibitor. This Tamias sibiricus (Siberian chipmunk) protein is Alpha-1-antitrypsin-like protein CM55-MS.